A 640-amino-acid chain; its full sequence is Replication protein A 70 kDa DNA-binding subunit A (640 aa).

A DNA-binding region (OB) is located at residues 211-293 (AIKARVTAKG…NHLKNEWEIF (83 aa)). Residues 503-529 (CPLMIGDKQCNKKVTRSGTNRWLCDRC) form a C4-type zinc finger.

It belongs to the replication factor A protein 1 family. Heterotrimer of RPA1, RPA2 and RPA3 (canonical replication protein A complex). Interacts with RPA2A. As to expression, expressed in roots, leaves, stalks and flower buds.

The protein localises to the nucleus. Component of the replication protein A complex (RPA) required for DNA recombination, repair and replication. The activity of RPA is mediated by single-stranded DNA binding and protein interactions. Plays an essential role at later stages of meiotic recombination events required for the formation of class I crossovers. Is essential for normal progression through meiosis in pollen mother cells. Is involved in repair of double-strand DNA breaks (DSBs) induced by genotoxic stresses, but does not seem to be required for the repair of meiotic DSBs. The protein is Replication protein A 70 kDa DNA-binding subunit A (RPA1A) of Arabidopsis thaliana (Mouse-ear cress).